The following is a 132-amino-acid chain: Vesicle transport protein GOT1A (132 aa).

Topologically, residues 1–16 (MISITEWQKIGVGTTG) are cytoplasmic. A helical membrane pass occupies residues 17–37 (FGIFFILFGMLLYFDSVLLAF). Over 38–39 (GN) the chain is Lumenal. The chain crosses the membrane as a helical span at residues 40–60 (LLFLTGLSLIIGLRRTFSFFF). Over 61–68 (QRHKFKGT) the chain is Cytoplasmic. The chain crosses the membrane as a helical span at residues 69–89 (SFFLGGVVIVLLRWPLLGMCL). The Lumenal portion of the chain corresponds to 90-100 (ETYGFFSLFRG). Residues 101 to 121 (FFPVAFGFLGSASNIPFLSAL) form a helical membrane-spanning segment. At 122-132 (FQRLQGTSSMV) the chain is on the cytoplasmic side.

The protein belongs to the GOT1 family.

Its subcellular location is the golgi apparatus membrane. In terms of biological role, may be involved in fusion of ER-derived transport vesicles with the Golgi complex. This is Vesicle transport protein GOT1A from Bos taurus (Bovine).